The sequence spans 113 residues: Urease subunit beta (113 aa).

Belongs to the urease beta subunit family. In terms of assembly, heterotrimer of UreA (gamma), UreB (beta) and UreC (alpha) subunits. Three heterotrimers associate to form the active enzyme.

The protein resides in the cytoplasm. It catalyses the reaction urea + 2 H2O + H(+) = hydrogencarbonate + 2 NH4(+). The protein operates within nitrogen metabolism; urea degradation; CO(2) and NH(3) from urea (urease route): step 1/1. This Cyanothece sp. (strain PCC 7425 / ATCC 29141) protein is Urease subunit beta.